Here is a 204-residue protein sequence, read N- to C-terminus: B9 domain-containing protein 1 (204 aa).

The C2 B9-type domain maps to 9-127 (FLLMVNGQVE…TIPMFVPEST (119 aa)). The tract at residues 182-204 (GYDTGPSDTQGVLGPSPPQSFPQ) is disordered.

Belongs to the B9D family. In terms of assembly, part of the tectonic-like complex (also named B9 complex).

Its subcellular location is the cytoplasm. It localises to the cytoskeleton. The protein localises to the cilium basal body. The protein resides in the cilium axoneme. Functionally, component of the tectonic-like complex, a complex localized at the transition zone of primary cilia and acting as a barrier that prevents diffusion of transmembrane proteins between the cilia and plasma membranes. Required for ciliogenesis and sonic hedgehog/SHH signaling. The polypeptide is B9 domain-containing protein 1 (B9D1) (Homo sapiens (Human)).